A 372-amino-acid chain; its full sequence is tRNA-specific 2-thiouridylase MnmA (372 aa).

ATP-binding positions include 6–13 (AMSGGVDS) and L32. C101 serves as the catalytic Nucleophile. C101 and C193 form a disulfide bridge. G125 is a binding site for ATP. The tract at residues 143–145 (KDQ) is interaction with tRNA. C193 serves as the catalytic Cysteine persulfide intermediate.

This sequence belongs to the MnmA/TRMU family.

Its subcellular location is the cytoplasm. It catalyses the reaction S-sulfanyl-L-cysteinyl-[protein] + uridine(34) in tRNA + AH2 + ATP = 2-thiouridine(34) in tRNA + L-cysteinyl-[protein] + A + AMP + diphosphate + H(+). Its function is as follows. Catalyzes the 2-thiolation of uridine at the wobble position (U34) of tRNA, leading to the formation of s(2)U34. The protein is tRNA-specific 2-thiouridylase MnmA of Corynebacterium kroppenstedtii (strain DSM 44385 / JCM 11950 / CIP 105744 / CCUG 35717).